The primary structure comprises 677 residues: Methionine--tRNA ligase (677 aa).

A 'HIGH' region motif is present at residues 14 to 24; sequence PYANGSIHLGH. Zn(2+) is bound by residues Cys145, Cys148, Cys158, and Cys161. Residues 331 to 335 carry the 'KMSKS' region motif; the sequence is KMSKS. Residue Lys334 coordinates ATP. One can recognise a tRNA-binding domain in the interval 575-677; it reads AFAAVDLRIA…SGAKPGQRVK (103 aa).

Belongs to the class-I aminoacyl-tRNA synthetase family. MetG type 1 subfamily. In terms of assembly, homodimer. Requires Zn(2+) as cofactor.

Its subcellular location is the cytoplasm. It catalyses the reaction tRNA(Met) + L-methionine + ATP = L-methionyl-tRNA(Met) + AMP + diphosphate. Is required not only for elongation of protein synthesis but also for the initiation of all mRNA translation through initiator tRNA(fMet) aminoacylation. The polypeptide is Methionine--tRNA ligase (Pseudomonas aeruginosa (strain LESB58)).